The chain runs to 276 residues: NAC domain-containing protein 67 (276 aa).

One can recognise an NAC domain in the interval 17–170; that stretch reads LPPGFRFHPT…DWVLCRLYNK (154 aa).

Expressed in leaf blades.

It is found in the nucleus. Its function is as follows. Probable transcription factor involved in stress response. This is NAC domain-containing protein 67 from Oryza sativa subsp. japonica (Rice).